The primary structure comprises 83 residues: RNA-binding protein Hfq (83 aa).

The Sm domain maps to 11-71 (DTFLNHVRKN…ISTIMPGHPV (61 aa)).

The protein belongs to the Hfq family. Homohexamer.

RNA chaperone that binds small regulatory RNA (sRNAs) and mRNAs to facilitate mRNA translational regulation in response to envelope stress, environmental stress and changes in metabolite concentrations. Also binds with high specificity to tRNAs. This is RNA-binding protein Hfq from Methylobacterium radiotolerans (strain ATCC 27329 / DSM 1819 / JCM 2831 / NBRC 15690 / NCIMB 10815 / 0-1).